We begin with the raw amino-acid sequence, 358 residues long: D-alanine--D-alanine ligase (358 aa).

Residues K136–Q341 form the ATP-grasp domain. Residue E169–E224 coordinates ATP. Mg(2+)-binding residues include D295, E308, and N310.

It belongs to the D-alanine--D-alanine ligase family. Mg(2+) serves as cofactor. Requires Mn(2+) as cofactor.

The protein resides in the cytoplasm. The catalysed reaction is 2 D-alanine + ATP = D-alanyl-D-alanine + ADP + phosphate + H(+). It functions in the pathway cell wall biogenesis; peptidoglycan biosynthesis. Its function is as follows. Cell wall formation. The protein is D-alanine--D-alanine ligase of Enterococcus hirae (strain ATCC 9790 / DSM 20160 / JCM 8729 / LMG 6399 / NBRC 3181 / NCIMB 6459 / NCDO 1258 / NCTC 12367 / WDCM 00089 / R).